The primary structure comprises 507 residues: tRNA-2-methylthio-N(6)-dimethylallyladenosine synthase (507 aa).

The MTTase N-terminal domain occupies 13–129; that stretch reads RTYQVRTYGC…LPALLERARH (117 aa). Residues C22, C58, C92, C166, C170, and C173 each contribute to the [4Fe-4S] cluster site. The Radical SAM core domain occupies 152–388; that stretch reads RESAYAAWVS…IALQESVTLE (237 aa). Positions 391–462 constitute a TRAM domain; it reads QKQIGRMIEV…PHHLIADDGV (72 aa). The segment covering 459–478 has biased composition (basic and acidic residues); the sequence is DDGVRSHRRTRAGDAHEAGK. The interval 459–492 is disordered; that stretch reads DDGVRSHRRTRAGDAHEAGKKPSTPGIGLGMPAI.

It belongs to the methylthiotransferase family. MiaB subfamily. In terms of assembly, monomer. The cofactor is [4Fe-4S] cluster.

It is found in the cytoplasm. The catalysed reaction is N(6)-dimethylallyladenosine(37) in tRNA + (sulfur carrier)-SH + AH2 + 2 S-adenosyl-L-methionine = 2-methylsulfanyl-N(6)-dimethylallyladenosine(37) in tRNA + (sulfur carrier)-H + 5'-deoxyadenosine + L-methionine + A + S-adenosyl-L-homocysteine + 2 H(+). Functionally, catalyzes the methylthiolation of N6-(dimethylallyl)adenosine (i(6)A), leading to the formation of 2-methylthio-N6-(dimethylallyl)adenosine (ms(2)i(6)A) at position 37 in tRNAs that read codons beginning with uridine. The chain is tRNA-2-methylthio-N(6)-dimethylallyladenosine synthase from Mycobacteroides abscessus (strain ATCC 19977 / DSM 44196 / CCUG 20993 / CIP 104536 / JCM 13569 / NCTC 13031 / TMC 1543 / L948) (Mycobacterium abscessus).